Here is a 721-residue protein sequence, read N- to C-terminus: Protein Hook homolog 2 (721 aa).

The 117-residue stretch at 7–123 (VELCDSLLTW…KMVQLVLGCA (117 aa)) folds into the Calponin-homology (CH) domain. 2 coiled-coil regions span residues 181-425 (LSED…RCSH) and 484-659 (DLQN…EKLI). The segment at 696-721 (TNARRGQISRSHTLLPRYTDKRQSLS) is disordered.

Belongs to the hook family. Interacts with microtubules.

It is found in the cytoplasm. Its subcellular location is the cytoskeleton. The protein localises to the microtubule organizing center. It localises to the centrosome. Its function is as follows. May function to promote vesicle trafficking and/or fusion. May contribute to the establishment and maintenance of centrosome function. This chain is Protein Hook homolog 2 (hook2), found in Xenopus laevis (African clawed frog).